We begin with the raw amino-acid sequence, 674 residues long: DNA ligase (674 aa).

Residues 34–38 (DFEFD), 83–84 (SL), and Glu-117 contribute to the NAD(+) site. Catalysis depends on Lys-119, which acts as the N6-AMP-lysine intermediate. NAD(+)-binding residues include Arg-140, Glu-184, Lys-297, and Lys-321. The Zn(2+) site is built by Cys-415, Cys-418, Cys-433, and Cys-439. Positions 598–674 (LVNTNFEGQS…IDEDEFERML (77 aa)) constitute a BRCT domain.

Belongs to the NAD-dependent DNA ligase family. LigA subfamily. Mg(2+) serves as cofactor. Mn(2+) is required as a cofactor.

The catalysed reaction is NAD(+) + (deoxyribonucleotide)n-3'-hydroxyl + 5'-phospho-(deoxyribonucleotide)m = (deoxyribonucleotide)n+m + AMP + beta-nicotinamide D-nucleotide.. Its function is as follows. DNA ligase that catalyzes the formation of phosphodiester linkages between 5'-phosphoryl and 3'-hydroxyl groups in double-stranded DNA using NAD as a coenzyme and as the energy source for the reaction. It is essential for DNA replication and repair of damaged DNA. The protein is DNA ligase of Chlorobaculum parvum (strain DSM 263 / NCIMB 8327) (Chlorobium vibrioforme subsp. thiosulfatophilum).